A 329-amino-acid chain; its full sequence is Cytosolic arginine sensor for mTORC1 subunit 1 (329 aa).

Residue S14 is modified to Phosphoserine; by PKB/AKT1. 2 consecutive ACT domains span residues 72 to 138 (AEAT…HTLA) and 260 to 321 (GELW…EVLQ). L-arginine-binding positions include 111–112 (SV), G274, 280–281 (IV), and 300–304 (TFNFD).

This sequence belongs to the GATS family. In terms of assembly, forms homodimers and heterodimers with CASTOR2. Interacts with the GATOR2 complex which is composed of MIOS, SEC13, SEH1L, WDR24 and WDR59; the interaction is negatively regulated by arginine. Interacts with TM4SF5; the interaction is positively regulated by leucine and is negatively regulated by arginine. Post-translationally, phosphorylation at Ser-14 by AKT1, promoting the interaction between CASTOR1 and RNF167. In terms of processing, ubiquitinated by RNF167 via 'Lys-29'-polyubiquitination, leading to its degradation, releasing the GATOR2 complex. Ubiquitination by RNF167 is promoted by phosphorylation at Ser-14 by AKT1. Widely expressed.

It localises to the cytoplasm. Its subcellular location is the cytosol. In terms of biological role, functions as an intracellular arginine sensor within the amino acid-sensing branch of the TORC1 signaling pathway. As a homodimer or a heterodimer with CASTOR2, binds and inhibits the GATOR subcomplex GATOR2 and thereby mTORC1. Binding of arginine to CASTOR1 allosterically disrupts the interaction of CASTOR1-containing dimers with GATOR2 which can in turn activate mTORC1 and the TORC1 signaling pathway. This Homo sapiens (Human) protein is Cytosolic arginine sensor for mTORC1 subunit 1.